A 103-amino-acid chain; its full sequence is Large ribosomal subunit protein bL21 (103 aa).

The protein belongs to the bacterial ribosomal protein bL21 family. As to quaternary structure, part of the 50S ribosomal subunit. Contacts protein L20.

Its function is as follows. This protein binds to 23S rRNA in the presence of protein L20. This Borrelia garinii subsp. bavariensis (strain ATCC BAA-2496 / DSM 23469 / PBi) (Borreliella bavariensis) protein is Large ribosomal subunit protein bL21.